Consider the following 579-residue polypeptide: Polyadenylate-binding protein, cytoplasmic and nuclear (579 aa).

Positions 1-10 (MADITEKTAE) are enriched in basic and acidic residues. Positions 1 to 32 (MADITEKTAEQLENLSLQDKQEGTNEENQSET) are disordered. 4 consecutive RRM domains span residues 35–113 (ASLY…WSQR), 123–200 (GNIF…PHLS), 216–293 (TNVY…RAQK), and 319–396 (INLF…IAQR). The 80-residue stretch at 487-566 (GFARNGPAAN…ASAAYESFKQ (80 aa)) folds into the PABC domain. Residues 560–579 (AYESFKQEQQQPQGEEAQQA) form a disordered region. The segment covering 566 to 579 (QEQQQPQGEEAQQA) has biased composition (low complexity).

It belongs to the polyadenylate-binding protein type-1 family.

The protein resides in the cytoplasm. The protein localises to the nucleus. Binds the poly(A) tail of mRNA. Appears to be an important mediator of the multiple roles of the poly(A) tail in mRNA biogenesis, stability and translation. In the nucleus, involved in both mRNA cleavage and polyadenylation. Is also required for efficient mRNA export to the cytoplasm. Acts in concert with a poly(A)-specific nuclease (PAN) to affect poly(A) tail shortening, which may occur concomitantly with either nucleocytoplasmic mRNA transport or translational initiation. In the cytoplasm, stimulates translation initiation and regulates mRNA decay through translation termination-coupled poly(A) shortening, probably mediated by PAN. This chain is Polyadenylate-binding protein, cytoplasmic and nuclear (PAB1), found in Candida glabrata (strain ATCC 2001 / BCRC 20586 / JCM 3761 / NBRC 0622 / NRRL Y-65 / CBS 138) (Yeast).